Reading from the N-terminus, the 222-residue chain is Protein GrpE (222 aa).

Disordered regions lie at residues Met-1–Gln-21 and Lys-200–Ala-222.

It belongs to the GrpE family. In terms of assembly, homodimer.

It is found in the cytoplasm. In terms of biological role, participates actively in the response to hyperosmotic and heat shock by preventing the aggregation of stress-denatured proteins, in association with DnaK and GrpE. It is the nucleotide exchange factor for DnaK and may function as a thermosensor. Unfolded proteins bind initially to DnaJ; upon interaction with the DnaJ-bound protein, DnaK hydrolyzes its bound ATP, resulting in the formation of a stable complex. GrpE releases ADP from DnaK; ATP binding to DnaK triggers the release of the substrate protein, thus completing the reaction cycle. Several rounds of ATP-dependent interactions between DnaJ, DnaK and GrpE are required for fully efficient folding. This is Protein GrpE from Chelativorans sp. (strain BNC1).